Reading from the N-terminus, the 168-residue chain is Calcium-binding protein 2 (168 aa).

4 EF-hand domains span residues 13–48 (GMEKDLESLFKKYDSDRNGKITYIEIVETLRKAGKK), 48–83 (KNPERIADLLFRDDTDKNGELTIEEAKLRIVRMNDE), 88–123 (VLNWDVEKFINDNDKDGDRKITRDEVLQRFTEQGAE), and 124–159 (DPELITDSIFRQMDLDRDGVITCDEIKEFNRKKKFS). Residues aspartate 26, aspartate 28, asparagine 30, lysine 32, glutamate 37, aspartate 61, aspartate 63, asparagine 65, glutamate 67, glutamate 72, aspartate 101, aspartate 103, aspartate 105, lysine 107, glutamate 112, aspartate 137, aspartate 139, aspartate 141, and glutamate 148 each contribute to the Ca(2+) site.

Not known; probably binds four calcium ions. In Dictyostelium discoideum (Social amoeba), this protein is Calcium-binding protein 2 (cbp2).